The sequence spans 299 residues: NAD kinase (299 aa).

Residue Asp-64 is the Proton acceptor of the active site. NAD(+)-binding positions include 64–65 (DG), 138–139 (ND), Arg-149, Arg-166, Asp-168, 179–184 (TGYAVS), and Gln-238.

The protein belongs to the NAD kinase family. The cofactor is a divalent metal cation.

Its subcellular location is the cytoplasm. It catalyses the reaction NAD(+) + ATP = ADP + NADP(+) + H(+). Functionally, involved in the regulation of the intracellular balance of NAD and NADP, and is a key enzyme in the biosynthesis of NADP. Catalyzes specifically the phosphorylation on 2'-hydroxyl of the adenosine moiety of NAD to yield NADP. The sequence is that of NAD kinase from Nitratidesulfovibrio vulgaris (strain ATCC 29579 / DSM 644 / CCUG 34227 / NCIMB 8303 / VKM B-1760 / Hildenborough) (Desulfovibrio vulgaris).